Reading from the N-terminus, the 327-residue chain is Sphingomyelin synthase-related 2 (327 aa).

5 consecutive transmembrane segments (helical) span residues 54 to 74 (LLATAMVGVGWLSNEVALAWV), 99 to 119 (AIRIAEYIMMILLISALLVMF), 131 to 151 (VFFCIAMAYSFRALCVTIFQV), 192 to 212 (LCGDLIVSGHTLTIFTAFLVF), and 220 to 240 (LQPLSHIYHVLAFTALFSILL). The active site involves His-201. Topologically, residues 241–327 (ARKHYMIDIV…TLKKSRRSFE (87 aa)) are cytoplasmic. Residues His-244 and Asp-248 contribute to the active site.

The protein belongs to the sphingomyelin synthase family.

The protein resides in the membrane. In Caenorhabditis elegans, this protein is Sphingomyelin synthase-related 2.